Consider the following 142-residue polypeptide: Hemoglobin subunit theta-1 (142 aa).

The Globin domain maps to 2 to 142 (ALSAEDRALV…VISALVSEYR (141 aa)). Positions 59 and 88 each coordinate heme b.

It belongs to the globin family.

This is Hemoglobin subunit theta-1 (HBQ1) from Homo sapiens (Human).